The chain runs to 535 residues: Estrogen receptor (535 aa).

The disordered stretch occupies residues 1–21; it reads SRMLTDPPRIGSMQSLGSSPT. Residues 1–104 are modulating; the sequence is SRMLTDPPRI…VFEMANETRY (104 aa). Residues 12–21 show a composition bias toward polar residues; that stretch reads SMQSLGSSPT. 2 NR C4-type zinc fingers span residues 105–125 and 141–165; these read CAVCSDFASGYHYGFWSCEGC and CPATNQCTMDRNRRKSCQACRLRKC. The nuclear receptor DNA-binding region spans 105 to 170; sequence CAVCSDFASG…RLRKCYEVGM (66 aa). The interval 171 to 236 is hinge; sequence VKGGLRKDRG…GGWCGPRITM (66 aa). Residues 187–229 are disordered; that stretch reads DKRYCGPAGDREKPYGDLEHRTAPPQDGGRNSSSSSLSGGGGW. A compositionally biased stretch (basic and acidic residues) spans 195-208; sequence GDREKPYGDLEHRT. Residues 214–223 show a composition bias toward low complexity; that stretch reads GGRNSSSSSL. Positions 237–473 constitute an NR LBD domain; that stretch reads PPEQVLFLLQ…DLLLEMLDGH (237 aa). The segment at 478–535 is disordered; it reads PGKVAQAGEQTEGPSTTTTTSTGSSIGPMRGSQDTHIRSPGSGVLQYGSPSSDQMPIP. Positions 492-502 are enriched in low complexity; the sequence is STTTTTSTGSS. Residues 525-535 are compositionally biased toward polar residues; it reads GSPSSDQMPIP.

The protein belongs to the nuclear hormone receptor family. NR3 subfamily. In terms of assembly, binds DNA as a homodimer. Can form a heterodimer with ER-beta. Highest expression in brain and liver.

It localises to the nucleus. Its function is as follows. The steroid hormones and their receptors are involved in the regulation of eukaryotic gene expression and affect cellular proliferation and differentiation in target tissues. The sequence is that of Estrogen receptor (esr1) from Salmo salar (Atlantic salmon).